The sequence spans 347 residues: LRP2-binding protein (347 aa).

A TPR repeat occupies 59 to 92 (TLAYFLRGQLYFEEGWYEEALEQFEEIKEKDHQA). Sel1-like repeat units lie at residues 93–125 (TYQL…DSPC), 133–168 (FAAA…DNGN), 173–206 (VKAQ…GNGN), 207–242 (LESQ…ERGN), 243–277 (VYAQ…EVHD), and 297–332 (AMAS…RLNP).

In terms of assembly, interacts with LRP2.

The protein resides in the cytoplasm. May act as an adapter that regulates LRP2 function. This is LRP2-binding protein (LRP2BP) from Homo sapiens (Human).